Here is a 211-residue protein sequence, read N- to C-terminus: Large ribosomal subunit protein bL25 (211 aa).

Residues 175-211 are disordered; that stretch reads VSEPVEQDLGEESETEEEGAEGEKPAESTGEEPGDDE. A compositionally biased stretch (acidic residues) spans 179–194; it reads VEQDLGEESETEEEGA.

The protein belongs to the bacterial ribosomal protein bL25 family. CTC subfamily. Part of the 50S ribosomal subunit; part of the 5S rRNA/L5/L18/L25 subcomplex. Contacts the 5S rRNA. Binds to the 5S rRNA independently of L5 and L18.

In terms of biological role, this is one of the proteins that binds to the 5S RNA in the ribosome where it forms part of the central protuberance. The sequence is that of Large ribosomal subunit protein bL25 from Kocuria rhizophila (strain ATCC 9341 / DSM 348 / NBRC 103217 / DC2201).